Reading from the N-terminus, the 535-residue chain is Probable glucomannan 4-beta-mannosyltransferase 14 (535 aa).

The chain crosses the membrane as a helical span at residues Q42–V62. D131 is a catalytic residue. Residues D193 and D195 each contribute to the substrate site. D287 is an active-site residue. 4 helical membrane passes run I366 to F386, I403 to L423, I482 to Y502, and L503 to G523.

It belongs to the glycosyltransferase 2 family. Plant cellulose synthase-like A subfamily.

The protein localises to the golgi apparatus membrane. It catalyses the reaction GDP-mannose + (glucomannan)n = GDP + (glucomannan)n+1.. Functionally, probable mannan synthase which consists of a 4-beta-mannosyltransferase activity on mannan using GDP-mannose. The beta-1,4-mannan product is the backbone for galactomannan synthesis by galactomannan galactosyltransferase. Galactomannan is a noncellulosic polysaccharides of plant cell wall. This Arabidopsis thaliana (Mouse-ear cress) protein is Probable glucomannan 4-beta-mannosyltransferase 14.